Reading from the N-terminus, the 540-residue chain is Chaperonin GroEL 4 (540 aa).

Residues 29–32 (TLGP), 86–90 (DGTTT), Gly-413, 477–479 (NAA), and Asp-493 contribute to the ATP site.

Belongs to the chaperonin (HSP60) family. Forms a cylinder of 14 subunits composed of two heptameric rings stacked back-to-back. Interacts with the co-chaperonin GroES.

It is found in the cytoplasm. The catalysed reaction is ATP + H2O + a folded polypeptide = ADP + phosphate + an unfolded polypeptide.. Its function is as follows. Together with its co-chaperonin GroES, plays an essential role in assisting protein folding. The GroEL-GroES system forms a nano-cage that allows encapsulation of the non-native substrate proteins and provides a physical environment optimized to promote and accelerate protein folding. This Frankia casuarinae (strain DSM 45818 / CECT 9043 / HFP020203 / CcI3) protein is Chaperonin GroEL 4.